The sequence spans 115 residues: U3-lycotoxin-Ls1a (115 aa).

Positions 1-20 (MKFVLLFGVFLVTLFSYSSA) are cleaved as a signal peptide. Residues 21-44 (EMLDDFDQAAEDELLSLIEKEEAR) constitute a propeptide that is removed on maturation. 4 cysteine pairs are disulfide-bonded: cysteine 48–cysteine 63, cysteine 55–cysteine 72, cysteine 62–cysteine 87, and cysteine 74–cysteine 85.

The protein belongs to the neurotoxin 19 (CSTX) family. 01 subfamily. Expressed by the venom gland.

It is found in the secreted. The polypeptide is U3-lycotoxin-Ls1a (Lycosa singoriensis (Wolf spider)).